A 220-amino-acid chain; its full sequence is MNILIFGPPGSGKSTQARRITERYGLTYIASGDIIRAEIKARTPLGIEMERYLSRGDLIPDTIVNTLIISKLRRVRENFIMDGYPRTPEQVITLENYLYDHGIKLDVAIDIYITKEESVRRISGRRICSKCGAVYHVEFNPPKVPGKCDICGGELIQRPDDRPEIVEKRYDIYSKNMEPIIKFYQKQGIYVRIDGHGSIDEVWERIRPLLDYIYNQENRR.

10–15 (GSGKST) is a binding site for ATP. Positions 30–59 (ASGDIIRAEIKARTPLGIEMERYLSRGDLI) are NMP. AMP contacts are provided by residues arginine 36, 57–59 (DLI), 83–86 (GYPR), and glutamine 90. The interval 124–161 (GRRICSKCGAVYHVEFNPPKVPGKCDICGGELIQRPDD) is LID. Arginine 125 lines the ATP pocket. Residues cysteine 128 and cysteine 131 each coordinate Zn(2+). An ATP-binding site is contributed by 134-135 (VY). Residues cysteine 148 and cysteine 151 each coordinate Zn(2+). AMP-binding residues include arginine 158 and arginine 169. Glycine 197 serves as a coordination point for ATP.

Belongs to the adenylate kinase family. Monomer.

Its subcellular location is the cytoplasm. It catalyses the reaction AMP + ATP = 2 ADP. Its pathway is purine metabolism; AMP biosynthesis via salvage pathway; AMP from ADP: step 1/1. Functionally, catalyzes the reversible transfer of the terminal phosphate group between ATP and AMP. Plays an important role in cellular energy homeostasis and in adenine nucleotide metabolism. In Pyrococcus abyssi (strain GE5 / Orsay), this protein is Adenylate kinase.